The sequence spans 437 residues: Glutamate-1-semialdehyde 2,1-aminomutase (437 aa).

Lysine 274 carries the N6-(pyridoxal phosphate)lysine modification.

This sequence belongs to the class-III pyridoxal-phosphate-dependent aminotransferase family. HemL subfamily. As to quaternary structure, homodimer. Pyridoxal 5'-phosphate is required as a cofactor.

The protein localises to the cytoplasm. The enzyme catalyses (S)-4-amino-5-oxopentanoate = 5-aminolevulinate. Its pathway is porphyrin-containing compound metabolism; protoporphyrin-IX biosynthesis; 5-aminolevulinate from L-glutamyl-tRNA(Glu): step 2/2. This chain is Glutamate-1-semialdehyde 2,1-aminomutase, found in Paracidovorax citrulli (strain AAC00-1) (Acidovorax citrulli).